The chain runs to 299 residues: MPT51/MPB51 antigen (299 aa).

The first 26 residues, 1 to 26 (MKGRSALLRALWIAALSFGLGGVAVA), serve as a signal peptide directing secretion.

This sequence belongs to the mycobacterial A85 antigen family. Homodimer.

It is found in the secreted. In terms of biological role, may have a role in host tissue attachment, whereby ligands may include the serum protein fibronectin and small sugars. This is MPT51/MPB51 antigen (mpt51) from Mycobacterium bovis (strain ATCC BAA-935 / AF2122/97).